A 152-amino-acid chain; its full sequence is Deoxyuridine 5'-triphosphate nucleotidohydrolase (152 aa).

Substrate is bound by residues 62-64 (RSG), Asn75, and 79-81 (TVD).

It belongs to the dUTPase family. The cofactor is Mg(2+).

It catalyses the reaction dUTP + H2O = dUMP + diphosphate + H(+). It participates in pyrimidine metabolism; dUMP biosynthesis; dUMP from dCTP (dUTP route): step 2/2. Its function is as follows. This enzyme is involved in nucleotide metabolism: it produces dUMP, the immediate precursor of thymidine nucleotides and it decreases the intracellular concentration of dUTP so that uracil cannot be incorporated into DNA. The protein is Deoxyuridine 5'-triphosphate nucleotidohydrolase of Leifsonia xyli subsp. xyli (strain CTCB07).